The sequence spans 339 residues: MRLGVLDVGSNTVHLLVVDAYRGGHPTPMSSTKATLRMVEATDSSGKITKRAADKLVSTIGEFAKIAVSSGCAELMAFATSAVREAGNSDDVLSRVRKETGVRLQVLRGVDESRLTFLAVRRWFGWSAGRIINLDIGGGSLELSNGVDEEPEVALSLPLGAGRLTREWLPDDPPGRRRVAMLRDWLDSELSDASVTVLEAGKPDLAVATSKTFRSLARLTGAAPSAAGPRAKRALTVNGLRQLIAFISRMTASDRAELEGISTERAPQIVAGALVAEASMRALSIETVDICPWALREGLILRKLDSEADGTALVQTSVRDTRGQEVDRNAANRSRGDKT.

Positions 315-339 are disordered; it reads QTSVRDTRGQEVDRNAANRSRGDKT. The segment covering 319 to 339 has biased composition (basic and acidic residues); that stretch reads RDTRGQEVDRNAANRSRGDKT.

Belongs to the GppA/Ppx family. As to quaternary structure, homodimer.

The enzyme catalyses [phosphate](n) + H2O = [phosphate](n-1) + phosphate + H(+). Functionally, degradation of inorganic polyphosphates (polyP). Releases orthophosphate processively from the ends of the polyP chain. This Mycobacterium leprae (strain TN) protein is Exopolyphosphatase 1.